The sequence spans 1150 residues: ATP-dependent helicase/deoxyribonuclease subunit B (1150 aa).

8 to 15 lines the ATP pocket; it reads GRAGSGKS. [4Fe-4S] cluster-binding residues include Cys786, Cys1106, Cys1109, and Cys1115.

Belongs to the helicase family. AddB/RexB type 1 subfamily. Heterodimer of AddA and AddB. The cofactor is Mg(2+). It depends on [4Fe-4S] cluster as a cofactor.

The heterodimer acts as both an ATP-dependent DNA helicase and an ATP-dependent, dual-direction single-stranded exonuclease. Recognizes the chi site generating a DNA molecule suitable for the initiation of homologous recombination. The AddB subunit has 5' -&gt; 3' nuclease activity but not helicase activity. This is ATP-dependent helicase/deoxyribonuclease subunit B from Clostridium botulinum (strain Hall / ATCC 3502 / NCTC 13319 / Type A).